A 428-amino-acid polypeptide reads, in one-letter code: Tyrosine--tRNA ligase (428 aa).

L-tyrosine is bound at residue tyrosine 41. The 'HIGH' region signature appears at 46–55 (PTADSLHLGH). 2 residues coordinate L-tyrosine: tyrosine 179 and glutamine 183. Residues 239–243 (KFGKT) carry the 'KMSKS' region motif. Lysine 242 provides a ligand contact to ATP. The S4 RNA-binding domain occupies 361–418 (ADLMQALVDAELQPSRGQARKTIASNAVTINGEKQSDPEYIFNDEDRLFGRYTLLRRG).

Belongs to the class-I aminoacyl-tRNA synthetase family. TyrS type 1 subfamily. As to quaternary structure, homodimer.

Its subcellular location is the cytoplasm. The catalysed reaction is tRNA(Tyr) + L-tyrosine + ATP = L-tyrosyl-tRNA(Tyr) + AMP + diphosphate + H(+). Its function is as follows. Catalyzes the attachment of tyrosine to tRNA(Tyr) in a two-step reaction: tyrosine is first activated by ATP to form Tyr-AMP and then transferred to the acceptor end of tRNA(Tyr). The chain is Tyrosine--tRNA ligase from Salmonella paratyphi C (strain RKS4594).